The sequence spans 260 residues: Proteasome subunit alpha (260 aa).

Residues 241–260 form a disordered region; it reads VEEEEVKEKEEDYSELDSHY.

This sequence belongs to the peptidase T1A family. In terms of assembly, the 20S proteasome core is composed of 14 alpha and 14 beta subunits that assemble into four stacked heptameric rings, resulting in a barrel-shaped structure. The two inner rings, each composed of seven catalytic beta subunits, are sandwiched by two outer rings, each composed of seven alpha subunits. The catalytic chamber with the active sites is on the inside of the barrel. Has a gated structure, the ends of the cylinder being occluded by the N-termini of the alpha-subunits. Is capped at one or both ends by the proteasome regulatory ATPase, PAN.

Its subcellular location is the cytoplasm. The formation of the proteasomal ATPase PAN-20S proteasome complex, via the docking of the C-termini of PAN into the intersubunit pockets in the alpha-rings, triggers opening of the gate for substrate entry. Interconversion between the open-gate and close-gate conformations leads to a dynamic regulation of the 20S proteasome proteolysis activity. Its function is as follows. Component of the proteasome core, a large protease complex with broad specificity involved in protein degradation. The sequence is that of Proteasome subunit alpha from Pyrococcus horikoshii (strain ATCC 700860 / DSM 12428 / JCM 9974 / NBRC 100139 / OT-3).